Here is a 429-residue protein sequence, read N- to C-terminus: Enolase (429 aa).

A (2R)-2-phosphoglycerate-binding site is contributed by glutamine 165. Residue glutamate 207 is the Proton donor of the active site. Residues aspartate 244, glutamate 287, and aspartate 314 each coordinate Mg(2+). Positions 339, 368, 369, and 390 each coordinate (2R)-2-phosphoglycerate. Lysine 339 (proton acceptor) is an active-site residue.

This sequence belongs to the enolase family. The cofactor is Mg(2+).

The protein resides in the cytoplasm. It is found in the secreted. It localises to the cell surface. The catalysed reaction is (2R)-2-phosphoglycerate = phosphoenolpyruvate + H2O. The protein operates within carbohydrate degradation; glycolysis; pyruvate from D-glyceraldehyde 3-phosphate: step 4/5. Its function is as follows. Catalyzes the reversible conversion of 2-phosphoglycerate (2-PG) into phosphoenolpyruvate (PEP). It is essential for the degradation of carbohydrates via glycolysis. In Roseiflexus castenholzii (strain DSM 13941 / HLO8), this protein is Enolase.